The chain runs to 310 residues: Nucleotide-binding protein BLA_1368 (310 aa).

The interval 1–21 (MQSARNEQRGTGPESPHAASP) is disordered. An ATP-binding site is contributed by 32–39 (GMSGAGRS). 83–86 (DVRS) lines the GTP pocket.

This sequence belongs to the RapZ-like family.

Functionally, displays ATPase and GTPase activities. This is Nucleotide-binding protein BLA_1368 from Bifidobacterium animalis subsp. lactis (strain AD011).